Consider the following 257-residue polypeptide: Large ribosomal subunit protein uL2 (257 aa).

The tract at residues Val207 to Ala231 is disordered.

Belongs to the universal ribosomal protein uL2 family. Component of the large ribosomal subunit.

Its subcellular location is the cytoplasm. Functionally, component of the large ribosomal subunit. The ribosome is a large ribonucleoprotein complex responsible for the synthesis of proteins in the cell. The chain is Large ribosomal subunit protein uL2 (rpl8) from Xenopus tropicalis (Western clawed frog).